A 771-amino-acid polypeptide reads, in one-letter code: MIKMWRLQIVLVPPSAQDIITFLEARLNTPQSVSPMVQYNEDIITHNNSINNCSDPSPTSPSSQNSIQSNRSSDFINYLPNCKKFLHFTDGDNTLLQLSNEILTKFDRLYPNFKESIEIVSLQDRHGCDLDSEFIIKDVFENDGVVLVILKDELDWSRNQHISLLQLARQRRRQDNKPSTKSIVTEKRKKISKEDLSSISNKDTMHLIAKSSLKNNFINKSRVSTPLMNEILPLASKYDALNKEKCPMPLTSTVVASNVHKDVKDHARAKEGVVTQGSDNNKENIPSSTQQQKNDGAKRAESKDLDLLRNSSEDADYEPADENSPQISFDSIDTDFQLSTTSHTNSDMHIQYSNPSSGAHSPRKSSLEIKVQNKKGDDLPLNDKDIGENCRRIEAFSDEEDFNETDNDRADSFINNSKKASMGFRDINSDLDSVSFNSDIENAVQSTQSTKNVVSPPFFPEKELNNRLHQSQGKEALFRLVEKEFPDKSLGAASSTSHAKDVKIQETIRKLNRFKPTGETKVQKRNSITEPYYGKFGIMKKDKPKSITSKGVSLETKHFDDPNTIISGEKFAKFGKIKVKRKTDDVGSKVIEFKRKRNMGNRSLKDIFANAGKPPNAASTIKVVKLMRDPVDNSKDKVEATSNSTAQEQEQVSPKLPVMNSTPGKRKNGQAIPSSLERTPQLKKVKVTRSHSSPSSSSSMSLESSLDSSSSDDSDDDSDSRNVQVKKINFKTSHGPAGNSNGKPMLDVDDNEINTKKYQTPKYVESDEDDQ.

Disordered stretches follow at residues 48–69 (NSIN…SIQS), 271–330 (EGVV…ISFD), and 346–367 (SDMH…KSSL). The span at 51–69 (NNCSDPSPTSPSSQNSIQS) shows a compositional bias: low complexity. Positions 275 to 294 (TQGSDNNKENIPSSTQQQKN) are enriched in polar residues. Basic and acidic residues predominate over residues 295–307 (DGAKRAESKDLDL). Residues 346–359 (SDMHIQYSNPSSGA) show a composition bias toward polar residues. Position 397 is a phosphoserine (Ser-397). A Phosphothreonine modification is found at Thr-405. Residues 633 to 771 (NSKDKVEATS…KYVESDEDDQ (139 aa)) form a disordered region. Polar residues predominate over residues 640–652 (ATSNSTAQEQEQV). Positions 690 to 709 (SHSSPSSSSSMSLESSLDSS) are enriched in low complexity.

The protein to yeast YJL076w. As to quaternary structure, interacts with HPR1.

The protein resides in the nucleus. The chain is Topoisomerase 1-associated factor 2 (TOF2) from Saccharomyces cerevisiae (strain ATCC 204508 / S288c) (Baker's yeast).